The chain runs to 1159 residues: Ferroxidase HEPHL1 (1159 aa).

The N-terminal stretch at 1–23 (MFLKQPGGCILLQFLGLLGLVGA) is a signal peptide. 6 Plastocyanin-like domains span residues 24 to 206 (VTRT…LLVC), 217 to 365 (MRTD…VGNC), 378 to 560 (QRRY…LLVC), 570 to 718 (TQKG…ISSC), 730 to 906 (MLRT…LITC), and 914 to 1092 (KGRR…VPSQ). Residues 24–1114 (VTRTYYIGIV…KNLRPRGAKA (1091 aa)) lie on the Extracellular side of the membrane. His-126 and His-128 together coordinate Cu cation. Asn-160 is a glycosylation site (N-linked (GlcNAc...) asparagine). Residues Cys-180 and Cys-206 are joined by a disulfide bond. Residues His-186 and His-188 each contribute to the Cu cation site. The N-linked (GlcNAc...) asparagine glycan is linked to Asn-235. Cysteines 284 and 365 form a disulfide. His-303, Cys-346, and His-351 together coordinate Cu cation. N-linked (GlcNAc...) asparagine glycosylation occurs at Asn-406. An intrachain disulfide couples Cys-534 to Cys-560. Asn-588 is a glycosylation site (N-linked (GlcNAc...) asparagine). Cysteines 637 and 718 form a disulfide. Residues His-656, Cys-699, His-704, and Met-709 each coordinate Cu cation. N-linked (GlcNAc...) asparagine glycosylation occurs at Asn-771. An intrachain disulfide couples Cys-880 to Cys-906. A glycan (N-linked (GlcNAc...) asparagine) is linked at Asn-934. Residues His-1002, His-1005, His-1007, His-1047, Cys-1048, His-1049, His-1053, and Met-1058 each coordinate Cu cation. A helical membrane pass occupies residues 1115–1135 (ALVILFILGLLLLVATVVLAL). The Cytoplasmic portion of the chain corresponds to 1136–1159 (RLRSSRRQMAYREVQSCALPTDAL).

This sequence belongs to the multicopper oxidase family. Cu cation is required as a cofactor.

The protein localises to the membrane. The enzyme catalyses 4 Fe(2+) + O2 + 4 H(+) = 4 Fe(3+) + 2 H2O. Is a copper-binding glycoprotein with ferroxidase activity. It oxidizes Fe(2+) to Fe(3+) without releasing radical oxygen species. May be involved in the regulation of intracellular iron content. In Mus musculus (Mouse), this protein is Ferroxidase HEPHL1 (Hephl1).